A 547-amino-acid polypeptide reads, in one-letter code: Malolactic enzyme (547 aa).

Residue Tyr92 is the Proton donor of the active site. Catalysis depends on Lys165, which acts as the Proton acceptor. Lys165 provides a ligand contact to substrate. 3 residues coordinate Mn(2+): Glu236, Asp237, and Asp260. Residues 293–296 (AGTA), Asn405, and Asn450 each bind NAD(+). Substrate is bound at residue Asn450.

The protein belongs to the malic enzymes family. Homodimer. Requires Mn(2+) as cofactor. NAD(+) is required as a cofactor.

The enzyme catalyses (S)-malate + H(+) = (S)-lactate + CO2. Functionally, involved in the malolactic fermentation (MLF) of wine, which results in a natural decrease in acidity and favorable changes in wine flavors. Catalyzes the decarboxylation of L-malate to L-lactate. This Lactiplantibacillus plantarum (strain ATCC BAA-793 / NCIMB 8826 / WCFS1) (Lactobacillus plantarum) protein is Malolactic enzyme.